Consider the following 121-residue polypeptide: UPF0102 protein DehaBAV1_0707 (121 aa).

Belongs to the UPF0102 family.

The chain is UPF0102 protein DehaBAV1_0707 from Dehalococcoides mccartyi (strain ATCC BAA-2100 / JCM 16839 / KCTC 5957 / BAV1).